The chain runs to 544 residues: MTARTLSLMASLVAYDDSDSEAETEHAGSFNATGQQKDTSGVARPPGQDFASGTLDVPKAGAQPTKHGSCEDPGGYRLPLAQLGRSDWGSCPSQRLQWPGKEPQVTFPIKEPSCSSLWTSHVPASHMPLAAARFKQVKLSRNFPKSSFHAQSESETVGKNGSSFQKKKCEDCVVPYTPRRLRQRQALSTETGKGKDVEPQGPPAGRAPAPLYVGPGVSEFIQPYLNSHYKETTVPRKVLFHLRGHRGPVNTIQWCPVLSKSHMLLSTSMDKTFKVWNAVDSGHCLQTYSLHTEAVRAARWAPCGRRILSGGFDFALHLTDLETGTQLFSGRSDFRITTLKFHPKDHNIFLCGGFSSEMKAWDIRTGKVMRSYKATIQQTLDILFLREGSEFLSSTDASTRDSADRTIIAWDFRTSAKISNQIFHERFTCPSLALHPREPVFLAQTNGNYLALFSTVWPYRMSRRRRYEGHKVEGYSVGCECSPGGDLLVTGSADGRVLMYSFRTASRACTLQGHTQACVGTTYHPVLPSVLATCSWGGDMKIWH.

Disordered stretches follow at residues D17–G74 and Q183–P208. Positions F30–T39 are enriched in polar residues. WD repeat units lie at residues G244–Q286, L290–S329, G330–K373, T375–N420, H424–R463, G469–T510, and G513–H544.

As to expression, expressed in heart, muscle, testis, ovary, uterus and prostate.

In Homo sapiens (Human), this protein is WD repeat-containing protein 25.